The following is a 301-amino-acid chain: Methionyl-tRNA formyltransferase (301 aa).

109-112 (SLLP) is a (6S)-5,6,7,8-tetrahydrofolate binding site.

The protein belongs to the Fmt family.

The catalysed reaction is L-methionyl-tRNA(fMet) + (6R)-10-formyltetrahydrofolate = N-formyl-L-methionyl-tRNA(fMet) + (6S)-5,6,7,8-tetrahydrofolate + H(+). Attaches a formyl group to the free amino group of methionyl-tRNA(fMet). The formyl group appears to play a dual role in the initiator identity of N-formylmethionyl-tRNA by promoting its recognition by IF2 and preventing the misappropriation of this tRNA by the elongation apparatus. This is Methionyl-tRNA formyltransferase from Jannaschia sp. (strain CCS1).